The chain runs to 329 residues: Myoblast determination protein 1 homolog (329 aa).

Residues D160–L211 enclose the bHLH domain. Residues N256 to H279 are disordered. Residues Y263–E273 are compositionally biased toward acidic residues.

Efficient DNA binding requires dimerization with another bHLH protein. In terms of tissue distribution, body wall muscle cells; in clonal muscle precursors, in a set of early embryonic blastomeres (the ms-granddaughters), and in six glial-like cells called GLRS.

The protein resides in the nucleus. Functionally, accumulation defines the body wall muscle cell fate during embryogenesis. This chain is Myoblast determination protein 1 homolog (hlh-1), found in Caenorhabditis briggsae.